The primary structure comprises 621 residues: Chaperone protein HtpG (621 aa).

An a; substrate-binding region spans residues 1–328; that stretch reads MKQEKKKFDA…SEDLPLNISR (328 aa). Positions 329–544 are b; that stretch reads ESLQHNNVLE…EAAMDIRMER (216 aa). Positions 478–498 are disordered; that stretch reads DVDQATSSSEEKNKDDKKSDD. The span at 486–498 shows a compositional bias: basic and acidic residues; it reads SEEKNKDDKKSDD. A c region spans residues 545-621; that stretch reads FLIEQKQIAN…LNDIVQKAIL (77 aa).

The protein belongs to the heat shock protein 90 family. As to quaternary structure, homodimer.

It is found in the cytoplasm. In terms of biological role, molecular chaperone. Has ATPase activity. The polypeptide is Chaperone protein HtpG (Rickettsia bellii (strain RML369-C)).